The following is a 409-amino-acid chain: bZIP transcription factor 16 (409 aa).

Basic and acidic residues predominate over residues Met-1–Lys-16. 4 disordered regions span residues Met-1 to Ser-63, Asn-118 to Ser-236, Met-274 to Gln-327, and Thr-362 to Thr-409. Low complexity predominate over residues Ala-24 to Ala-34. Basic and acidic residues predominate over residues Gly-133–Pro-145. The span at Ser-152–Tyr-178 shows a compositional bias: polar residues. The span at Ser-179–Ser-203 shows a compositional bias: low complexity. A compositionally biased stretch (polar residues) spans Asn-216 to Ala-228. The bZIP domain occupies Glu-305–Leu-368. A Bipartite nuclear localization signal motif is present at residues Lys-307–Arg-323. The interval Lys-307–Lys-326 is basic motif. Residues Ser-314–Gln-327 are compositionally biased toward basic and acidic residues. The segment at Leu-333–Leu-368 is leucine-zipper. A compositionally biased stretch (basic and acidic residues) spans Ala-398–Thr-409.

This sequence belongs to the bZIP family. In terms of assembly, monomer, homodimer and heterodimers with BZIP68 and GBF1/BZIP41. Heterodimers with GBF2/BZIP54 and GBF3/BZIP55. Binds DNA as monomer and forms homo- and heterodimers. The monomeric form is redox regulated. Interacts with GIP1.

It is found in the nucleus. Transcriptional activator that binds to the G-box motif (5'-CACGTG-3') and other cis-acting elements with 5'-ACGT-3' core, such as Hex, C-box and as-1 motifs. Possesses high binding affinity to G-box, much lower affinity to Hex and C-box, and little affinity to as-1 element. G-box and G-box-like motifs are cis-acting elements defined in promoters of certain plant genes which are regulated by such diverse stimuli as light-induction or hormone control. Binds to the G-box motif 5'-CACGTG-3' of LHCB2.4 (At3g27690) promoter. May act as transcriptional repressor in light-regulated expression of LHCB2.4. Binds DNA as monomer. DNA-binding activity is redox-dependent. The polypeptide is bZIP transcription factor 16 (Arabidopsis thaliana (Mouse-ear cress)).